A 226-amino-acid chain; its full sequence is 3-dehydroquinate dehydratase (226 aa).

3-dehydroquinate-binding positions include S9, 32–34, and R59; that span reads EVR. H119 acts as the Proton donor/acceptor in catalysis. The active-site Schiff-base intermediate with substrate is the K146. Residues R187, T208, and Q212 each contribute to the 3-dehydroquinate site.

It belongs to the type-I 3-dehydroquinase family. In terms of assembly, homodimer.

The catalysed reaction is 3-dehydroquinate = 3-dehydroshikimate + H2O. The protein operates within metabolic intermediate biosynthesis; chorismate biosynthesis; chorismate from D-erythrose 4-phosphate and phosphoenolpyruvate: step 3/7. Functionally, involved in the third step of the chorismate pathway, which leads to the biosynthesis of aromatic amino acids. Catalyzes the cis-dehydration of 3-dehydroquinate (DHQ) and introduces the first double bond of the aromatic ring to yield 3-dehydroshikimate. In Desulfotalea psychrophila (strain LSv54 / DSM 12343), this protein is 3-dehydroquinate dehydratase.